An 823-amino-acid polypeptide reads, in one-letter code: Probable inorganic carbon transporter subunit DabA (823 aa).

Residues Cys-361, Asp-363, His-527, and Cys-542 each coordinate Zn(2+).

Belongs to the inorganic carbon transporter (TC 9.A.2) DabA family. As to quaternary structure, forms a complex with DabB. Requires Zn(2+) as cofactor.

It is found in the cell inner membrane. With respect to regulation, intracellular DIC accumulation is sensitive to CCCP (carbonyl cyanide-m-chlorophenylhydrazone) and DCCD (N,N-dicyclohexylcarbodiimide) and therefore likely driven by either proton potential, ATP, or both. Part of an energy-coupled inorganic carbon pump. Its function is as follows. Probably involved in transport of dissolved inorganic carbon (DIC) with upstream gene dabB (Tcr_0853); has been suggested to be a proton-DIC symporter. In Hydrogenovibrio crunogenus (strain DSM 25203 / XCL-2) (Thiomicrospira crunogena), this protein is Probable inorganic carbon transporter subunit DabA.